Here is a 223-residue protein sequence, read N- to C-terminus: Guanylate kinase (223 aa).

Residues 6-183 (GRLFVMTGAS…AVADFLAILT (178 aa)) form the Guanylate kinase-like domain. 13-20 (GASGVGKG) provides a ligand contact to ATP.

It belongs to the guanylate kinase family.

It is found in the cytoplasm. The catalysed reaction is GMP + ATP = GDP + ADP. Its function is as follows. Essential for recycling GMP and indirectly, cGMP. The polypeptide is Guanylate kinase (Thermus thermophilus (strain ATCC 27634 / DSM 579 / HB8)).